The sequence spans 503 residues: Glycosyltransferase family 92 protein ZK381.2 (503 aa).

A helical membrane pass occupies residues 7-27 (YKPCLLIILIFNSVILLFILI). One can recognise a GT92 domain in the interval 156–441 (KPVIICISPQ…FKCYFDSFYK (286 aa)).

This sequence belongs to the glycosyltransferase 92 family.

It is found in the membrane. The sequence is that of Glycosyltransferase family 92 protein ZK381.2 from Caenorhabditis elegans.